Consider the following 238-residue polypeptide: MRFRNRFQRFMNHRAPANGRYKPTCYEHAANCYTHAFLIVPAIVGSALLHRLSDDCWEKITAWIYGMGLCALFIVSTVFHIVSWKKSHLRTVEHCFHMCDRMVIYFFIAASYAPWLNLRELGPLASHMRWFIWLMAAGGTIYVFLYHEKYKVVELFFYLTMGFSPALVVTSMNNTDGLQELACGGLIYCLGVVFFKSDGIIPFAHAIWHLFVATAAAVHYYAIWKYLYRSPTDFIRHL.

Residues 1 to 28 (MRFRNRFQRFMNHRAPANGRYKPTCYEH) are Cytoplasmic-facing. Residues 29 to 49 (AANCYTHAFLIVPAIVGSALL) form a helical membrane-spanning segment. The Lumenal portion of the chain corresponds to 50–61 (HRLSDDCWEKIT). Residues 62 to 82 (AWIYGMGLCALFIVSTVFHIV) traverse the membrane as a helical segment. Residues 83-101 (SWKKSHLRTVEHCFHMCDR) lie on the Cytoplasmic side of the membrane. Residues 102 to 122 (MVIYFFIAASYAPWLNLRELG) form a helical membrane-spanning segment. Position 123 (P123) is a topological domain, lumenal. The helical transmembrane segment at 124–144 (LASHMRWFIWLMAAGGTIYVF) threads the bilayer. Residues 145-151 (LYHEKYK) lie on the Cytoplasmic side of the membrane. Residues 152-172 (VVELFFYLTMGFSPALVVTSM) form a helical membrane-spanning segment. The Lumenal portion of the chain corresponds to 173 to 174 (NN). Residues 175-195 (TDGLQELACGGLIYCLGVVFF) traverse the membrane as a helical segment. Residues 196 to 198 (KSD) lie on the Cytoplasmic side of the membrane. A helical transmembrane segment spans residues 199-219 (GIIPFAHAIWHLFVATAAAVH). Topologically, residues 220 to 238 (YYAIWKYLYRSPTDFIRHL) are lumenal.

Belongs to the ADIPOR family.

Its subcellular location is the late endosome membrane. The protein localises to the lysosome membrane. Functionally, involved in the dynamics of lysosomal membranes associated with microglial activation following brain lesion. The chain is Monocyte to macrophage differentiation factor from Mus musculus (Mouse).